Consider the following 737-residue polypeptide: Relaxin receptor 2 (737 aa).

The Extracellular segment spans residues 1–399; that stretch reads MFPLLHFIVL…SSFEDLLANN (399 aa). Residues 27-64 form the LDL-receptor class A domain; it reads LCQKGYFPCGNLTKCLPRAFHCDGVDDCGNGADEDNCG. Cystine bridges form between cysteine 28/cysteine 41, cysteine 35/cysteine 54, and cysteine 48/cysteine 63. Asparagine 37 carries an N-linked (GlcNAc...) asparagine glycan. Residue asparagine 121 is glycosylated (N-linked (GlcNAc...) asparagine). LRR repeat units follow at residues 121 to 142, 145 to 166, 169 to 190, 193 to 214, 217 to 238, 241 to 262, 265 to 286, 289 to 310, 313 to 334, and 337 to 358; these read NTTL…VFTK, QLKQ…AFFG, NLQI…VFKD, QLTW…LFTG, SLFF…MCAQ, QLNW…SFLS, SLTV…TFSS, NLGE…IFKD, LLQK…QFES, and QLQS…MFQP. Asparagine 257 carries an N-linked (GlcNAc...) asparagine glycan. An N-linked (GlcNAc...) asparagine glycan is attached at asparagine 318. The N-linked (GlcNAc...) asparagine glycan is linked to asparagine 361. Residues 400–420 traverse the membrane as a helical segment; that stretch reads ILRIFVWVIAFITCFGNLFVI. At 421–438 the chain is on the cytoplasmic side; it reads GMRSFIKAENTTHATSIK. A helical membrane pass occupies residues 439 to 459; that stretch reads ILCCADCLMGVYLFFIGFFDI. Over 460 to 478 the chain is Extracellular; sequence KYRGQYQKYALLWMESLQC. Residues cysteine 478 and cysteine 556 are joined by a disulfide bond. The helical transmembrane segment at 479–501 threads the bilayer; it reads RLMGFLAMLSTEVSVLLLTYLTL. The Cytoplasmic portion of the chain corresponds to 502 to 520; the sequence is EKFLAIVFPFSNIRPGKWQ. The chain crosses the membrane as a helical span at residues 521-541; sequence TMVILICIWIVGFLIAVIPFW. Over 542–575 the chain is Extracellular; the sequence is KEDYFGNFYGKNGVCFPLYYDQTEDIGSKGYSLG. A helical membrane pass occupies residues 576–596; the sequence is IFLGVNLLAFLIIVFSYTIMF. Residues 597–622 are Cytoplasmic-facing; the sequence is CSIKKTALQTSEVRNPIGREVAVANR. The chain crosses the membrane as a helical span at residues 623–643; that stretch reads FFFIVFSDAICWIPVFVIKIL. Residues 644–653 are Extracellular-facing; sequence SLFRVEIPGT. The chain crosses the membrane as a helical span at residues 654-674; it reads ITSWIVIFFLPVNSALNPILY. At 675–737 the chain is on the cytoplasmic side; the sequence is TLTTSFFKDK…LGDSIVKPIS (63 aa).

The protein belongs to the G-protein coupled receptor 1 family.

It is found in the cell membrane. In terms of biological role, receptor for relaxin. The activity of this receptor is mediated by G proteins leading to stimulation of adenylate cyclase and an increase of cAMP. May also be a receptor for Leydig insulin-like peptide (INSL3). In Canis lupus familiaris (Dog), this protein is Relaxin receptor 2 (RXFP2).